The sequence spans 146 residues: NADH-quinone oxidoreductase subunit A (146 aa).

3 consecutive transmembrane segments (helical) span residues 8–28, 63–83, and 93–113; these read FGSVFVFLLLGVIFVVGGYLT, FYVVALIFIIFDVEVVFLYPW, and FALIEVLVFAGILILGLAYAW.

The protein belongs to the complex I subunit 3 family. NDH-1 is composed of 14 different subunits. Subunits NuoA, H, J, K, L, M, N constitute the membrane sector of the complex.

Its subcellular location is the cell inner membrane. It carries out the reaction a quinone + NADH + 5 H(+)(in) = a quinol + NAD(+) + 4 H(+)(out). Its function is as follows. NDH-1 shuttles electrons from NADH, via FMN and iron-sulfur (Fe-S) centers, to quinones in the respiratory chain. The immediate electron acceptor for the enzyme in this species is believed to be a menaquinone. Couples the redox reaction to proton translocation (for every two electrons transferred, four hydrogen ions are translocated across the cytoplasmic membrane), and thus conserves the redox energy in a proton gradient. This Chlorobium chlorochromatii (strain CaD3) protein is NADH-quinone oxidoreductase subunit A.